Here is a 308-residue protein sequence, read N- to C-terminus: Tyrosine recombinase XerD (308 aa).

The Core-binding (CB) domain occupies 3 to 89; it reads NGFTRLTEQF…SIHEFHRFAL (87 aa). The 192-residue stretch at 110 to 301 folds into the Tyr recombinase domain; sequence TLPDVLTVDE…SPETLIETYL (192 aa). Active-site residues include Arg153, Lys177, His253, Arg256, and His279. The O-(3'-phospho-DNA)-tyrosine intermediate role is filled by Tyr288.

This sequence belongs to the 'phage' integrase family. XerD subfamily. Forms a cyclic heterotetrameric complex composed of two molecules of XerC and two molecules of XerD.

It is found in the cytoplasm. Functionally, site-specific tyrosine recombinase, which acts by catalyzing the cutting and rejoining of the recombining DNA molecules. The XerC-XerD complex is essential to convert dimers of the bacterial chromosome into monomers to permit their segregation at cell division. It also contributes to the segregational stability of plasmids. The protein is Tyrosine recombinase XerD of Bifidobacterium longum (strain NCC 2705).